We begin with the raw amino-acid sequence, 513 residues long: ATP synthase subunit alpha 2 (513 aa).

169–176 lines the ATP pocket; sequence GDRQTGKT.

It belongs to the ATPase alpha/beta chains family. In terms of assembly, F-type ATPases have 2 components, CF(1) - the catalytic core - and CF(0) - the membrane proton channel. CF(1) has five subunits: alpha(3), beta(3), gamma(1), delta(1), epsilon(1). CF(0) has three main subunits: a(1), b(2) and c(9-12). The alpha and beta chains form an alternating ring which encloses part of the gamma chain. CF(1) is attached to CF(0) by a central stalk formed by the gamma and epsilon chains, while a peripheral stalk is formed by the delta and b chains.

The protein localises to the cell inner membrane. It carries out the reaction ATP + H2O + 4 H(+)(in) = ADP + phosphate + 5 H(+)(out). Functionally, produces ATP from ADP in the presence of a proton gradient across the membrane. The alpha chain is a regulatory subunit. This is ATP synthase subunit alpha 2 from Pseudoalteromonas atlantica (strain T6c / ATCC BAA-1087).